Consider the following 257-residue polypeptide: Glutamate racemase (257 aa).

Residues 12 to 13 (DS) and 44 to 45 (YG) contribute to the substrate site. C75 acts as the Proton donor/acceptor in catalysis. A substrate-binding site is contributed by 76–77 (NT). Residue C185 is the Proton donor/acceptor of the active site. Position 186 to 187 (186 to 187 (TH)) interacts with substrate.

This sequence belongs to the aspartate/glutamate racemases family.

It catalyses the reaction L-glutamate = D-glutamate. It functions in the pathway cell wall biogenesis; peptidoglycan biosynthesis. In terms of biological role, provides the (R)-glutamate required for cell wall biosynthesis. The protein is Glutamate racemase of Clostridium botulinum (strain ATCC 19397 / Type A).